Reading from the N-terminus, the 379-residue chain is Omega-3 fatty acid desaturase, endoplasmic reticulum (379 aa).

The chain crosses the membrane as a helical span at residues 52–72 (LSYVVRDVIFVATLIGIAIHL). A Histidine box-1 motif is present at residues 97-101 (HDCGH). The short motif at 133–137 (HKTHH) is the Histidine box-2 element. 2 helical membrane passes run 213 to 233 (TLCWTVMAALLLYLCTAFGSL) and 236 to 256 (FKIYGAPYLIFVMWLDFVTYL). Positions 300–304 (HVIHH) match the Histidine box-3 motif.

Belongs to the fatty acid desaturase type 1 family.

It is found in the endoplasmic reticulum membrane. It functions in the pathway lipid metabolism; polyunsaturated fatty acid biosynthesis. Functionally, ER (microsomal) omega-3 fatty acid desaturase introduces the third double bond in the biosynthesis of 18:3 fatty acids, important constituents of plant membranes. It is thought to use cytochrome b5 as an electron donor and to act on fatty acids esterified to phosphatidylcholine and, possibly, other phospholipids. This Nicotiana tabacum (Common tobacco) protein is Omega-3 fatty acid desaturase, endoplasmic reticulum (FAD3).